Reading from the N-terminus, the 202-residue chain is ATP-dependent Clp protease proteolytic subunit (202 aa).

The Nucleophile role is filled by Ser101. His126 is a catalytic residue.

Belongs to the peptidase S14 family. Component of the chloroplastic Clp protease core complex.

The protein localises to the plastid. The protein resides in the chloroplast stroma. It catalyses the reaction Hydrolysis of proteins to small peptides in the presence of ATP and magnesium. alpha-casein is the usual test substrate. In the absence of ATP, only oligopeptides shorter than five residues are hydrolyzed (such as succinyl-Leu-Tyr-|-NHMec, and Leu-Tyr-Leu-|-Tyr-Trp, in which cleavage of the -Tyr-|-Leu- and -Tyr-|-Trp bonds also occurs).. Cleaves peptides in various proteins in a process that requires ATP hydrolysis. Has a chymotrypsin-like activity. Plays a major role in the degradation of misfolded proteins. This chain is ATP-dependent Clp protease proteolytic subunit, found in Platanus occidentalis (Sycamore).